Here is a 434-residue protein sequence, read N- to C-terminus: Histidine--tRNA ligase (434 aa).

It belongs to the class-II aminoacyl-tRNA synthetase family. As to quaternary structure, homodimer.

It localises to the cytoplasm. The enzyme catalyses tRNA(His) + L-histidine + ATP = L-histidyl-tRNA(His) + AMP + diphosphate + H(+). The protein is Histidine--tRNA ligase of Latilactobacillus sakei subsp. sakei (strain 23K) (Lactobacillus sakei subsp. sakei).